The following is a 100-amino-acid chain: Integration host factor subunit alpha (100 aa).

It belongs to the bacterial histone-like protein family. Heterodimer of an alpha and a beta chain.

This protein is one of the two subunits of integration host factor, a specific DNA-binding protein that functions in genetic recombination as well as in transcriptional and translational control. The chain is Integration host factor subunit alpha from Caulobacter vibrioides (strain ATCC 19089 / CIP 103742 / CB 15) (Caulobacter crescentus).